The primary structure comprises 99 residues: Aspartyl/glutamyl-tRNA(Asn/Gln) amidotransferase subunit C (99 aa).

It belongs to the GatC family. Heterotrimer of A, B and C subunits.

It catalyses the reaction L-glutamyl-tRNA(Gln) + L-glutamine + ATP + H2O = L-glutaminyl-tRNA(Gln) + L-glutamate + ADP + phosphate + H(+). It carries out the reaction L-aspartyl-tRNA(Asn) + L-glutamine + ATP + H2O = L-asparaginyl-tRNA(Asn) + L-glutamate + ADP + phosphate + 2 H(+). Allows the formation of correctly charged Asn-tRNA(Asn) or Gln-tRNA(Gln) through the transamidation of misacylated Asp-tRNA(Asn) or Glu-tRNA(Gln) in organisms which lack either or both of asparaginyl-tRNA or glutaminyl-tRNA synthetases. The reaction takes place in the presence of glutamine and ATP through an activated phospho-Asp-tRNA(Asn) or phospho-Glu-tRNA(Gln). In Burkholderia mallei (strain NCTC 10247), this protein is Aspartyl/glutamyl-tRNA(Asn/Gln) amidotransferase subunit C.